A 400-amino-acid polypeptide reads, in one-letter code: Queuine tRNA-ribosyltransferase (400 aa).

Asp93 functions as the Proton acceptor in the catalytic mechanism. Residues 93–97 (DSGGF), Asp147, Gln190, and Gly217 contribute to the substrate site. Residues 248 to 254 (GVGSPED) are RNA binding. Asp267 serves as the catalytic Nucleophile. The tract at residues 272-276 (TRIAR) is RNA binding; important for wobble base 34 recognition. Cys305, Cys307, Cys310, and His336 together coordinate Zn(2+). A disordered region spans residues 375 to 400 (RRERARAAGGAGHAPGPAEPLLPENR). Residues 388-400 (APGPAEPLLPENR) are compositionally biased toward low complexity.

This sequence belongs to the queuine tRNA-ribosyltransferase family. As to quaternary structure, homodimer. Within each dimer, one monomer is responsible for RNA recognition and catalysis, while the other monomer binds to the replacement base PreQ1. The cofactor is Zn(2+).

The enzyme catalyses 7-aminomethyl-7-carbaguanine + guanosine(34) in tRNA = 7-aminomethyl-7-carbaguanosine(34) in tRNA + guanine. It functions in the pathway tRNA modification; tRNA-queuosine biosynthesis. In terms of biological role, catalyzes the base-exchange of a guanine (G) residue with the queuine precursor 7-aminomethyl-7-deazaguanine (PreQ1) at position 34 (anticodon wobble position) in tRNAs with GU(N) anticodons (tRNA-Asp, -Asn, -His and -Tyr). Catalysis occurs through a double-displacement mechanism. The nucleophile active site attacks the C1' of nucleotide 34 to detach the guanine base from the RNA, forming a covalent enzyme-RNA intermediate. The proton acceptor active site deprotonates the incoming PreQ1, allowing a nucleophilic attack on the C1' of the ribose to form the product. After dissociation, two additional enzymatic reactions on the tRNA convert PreQ1 to queuine (Q), resulting in the hypermodified nucleoside queuosine (7-(((4,5-cis-dihydroxy-2-cyclopenten-1-yl)amino)methyl)-7-deazaguanosine). This chain is Queuine tRNA-ribosyltransferase, found in Symbiobacterium thermophilum (strain DSM 24528 / JCM 14929 / IAM 14863 / T).